The primary structure comprises 224 residues: Glutathione S-transferase U1 (224 aa).

A GST N-terminal domain is found at 6–85; the sequence is ESVKLLGFWA…YIDQTWKNSP (80 aa). Glutathione-binding positions include 16–17, 42–43, 56–57, and 69–70; these read SP, NK, KV, and ES. The 128-residue stretch at 90–217 folds into the GST C-terminal domain; the sequence is DPYEKAMARF…EKQIERMTKI (128 aa). Thr-151 is modified (phosphothreonine).

It belongs to the GST superfamily. Tau family.

The protein localises to the cytoplasm. It localises to the cytosol. The catalysed reaction is RX + glutathione = an S-substituted glutathione + a halide anion + H(+). Its function is as follows. May be involved in the conjugation of reduced glutathione to a wide number of exogenous and endogenous hydrophobic electrophiles and have a detoxification role against certain herbicides. This is Glutathione S-transferase U1 (GSTU1) from Arabidopsis thaliana (Mouse-ear cress).